The chain runs to 200 residues: Max dimerization protein 3 (200 aa).

2 disordered regions span residues 31 to 56 and 133 to 164; these read SILP…DNVR and RLLP…QEDL. The 53-residue stretch at 54 to 106 folds into the bHLH domain; it reads NVRSVHNELEKHRRAQLRRCLEQLKQQVPLSMENSRHTTLSLLHRAKQHIKKL.

Efficient DNA binding requires dimerization with another bHLH protein. Binds DNA as a heterodimer with MAX. In terms of tissue distribution, expressed broadly throughout the CNS and the eye, starting at neurula stages.

It localises to the nucleus. In terms of biological role, transcriptional repressor. Binds with MAX to form a sequence-specific DNA-binding protein complex which recognizes the core sequence 5'-CAC[GA]TG-3'. This Xenopus laevis (African clawed frog) protein is Max dimerization protein 3 (mxd3).